The chain runs to 225 residues: MTTMAETQTWQTVLGEEKQEPYFQEILDFVKKERKAGKIIYPPQKDIFNALKLTPYEAVKVVILGQDPYHGPNQAHGLAFSVRPGVPAPPSLQNIFKELHADLGVSIPSHGFLEKWAKQGVLLLNAALTVEAGKPQSHANIGWHRFTDKVIESLNDHPEVIVFLLWGSYAQKKSQLITNLRHRILKAPHPSPLSAARGFLGCRHFSKANQLLHEMGRGEIDWALD.

The Proton acceptor role is filled by Asp-67.

The protein belongs to the uracil-DNA glycosylase (UDG) superfamily. UNG family.

It is found in the cytoplasm. It catalyses the reaction Hydrolyzes single-stranded DNA or mismatched double-stranded DNA and polynucleotides, releasing free uracil.. Functionally, excises uracil residues from the DNA which can arise as a result of misincorporation of dUMP residues by DNA polymerase or due to deamination of cytosine. In Coxiella burnetii (strain Dugway 5J108-111), this protein is Uracil-DNA glycosylase.